The chain runs to 371 residues: Cysteine endopeptidase Rep1 (371 aa).

Residues 1-28 form the signal peptide; that stretch reads MGRVISSWRVLAVVAALMAMAAVELCAA. A propeptide spans 29 to 133 (activation peptide); that stretch reads IPFDERDLES…LPGFMYEGVR (105 aa). Intrachain disulfides connect C156–C198, C190–C231, and C290–C342. C159 is an active-site residue. N228 is a glycosylation site (N-linked (GlcNAc...) asparagine). Active-site residues include H296 and N317.

The protein belongs to the peptidase C1 family. Expressed in germinating seeds.

Its subcellular location is the protein storage vacuole. Its function is as follows. Cysteine endopeptidase that digests in vitro both the acidic and basic subunits of glutelin, the major seed storage protein of rice. Acts as a negative regulator of cell death. The polypeptide is Cysteine endopeptidase Rep1 (Oryza sativa subsp. japonica (Rice)).